The sequence spans 5218 residues: HC-toxin synthetase (5218 aa).

The tract at residues S223–L620 is adenylation 1. The Carrier 1 domain occupies M769–Q843. Position 803 is an O-(pantetheine 4'-phosphoryl)serine (S803). Positions I858–Y1154 are condensation 1. The epimerization stretch occupies residues E1338–A1806. Residues S1828 to M2233 are adenylation 2. The region spanning E2379 to Q2453 is the Carrier 2 domain. An O-(pantetheine 4'-phosphoryl)serine modification is found at S2414. Positions E2531–T2929 are condensation 2. An adenylation 3 region spans residues L2979–R3386. In terms of domain architecture, Carrier 3 spans Q3532 to Q3608. S3569 is subject to O-(pantetheine 4'-phosphoryl)serine. Residues E3649–E4102 are condensation 3. The adenylation 4 stretch occupies residues R4134–S4530. The Carrier 4 domain maps to T4666–N4740. Position 4701 is an O-(pantetheine 4'-phosphoryl)serine (S4701). Residues T4785 to A5101 form a condensation 4 region.

The protein belongs to the NRP synthetase family. Pantetheine 4'-phosphate serves as cofactor.

It functions in the pathway mycotoxin biosynthesis; HC-toxin biosynthesis. In terms of biological role, non-ribosomal peptide synthetase, part of the diffuse TOX2 gene cluster that mediates the biosynthesis of the HC-toxin, cyclic tetrapeptide of structure cyclo(D-Pro-L-Ala-D-Ala-L-Aeo), where Aeo stands for 2-amino-9,10-epoxi-8-oxodecanoic acid. HC-toxin is a determinant of specificity and virulence in the interaction between the producing fungus and its host, maize. HTS1, contains four modules, one for each amino acid in HC-toxin, with the order of activation being most likely Pro, Ala, Ala, and Aeo. In addition, HTS1 has one epimerase domain between modules 1 and 2, which is responsible for epimerizing L-Pro to D-Pro. The absence of an epimerizing domain after module 3, for producing D-Ala, can be explained by the presence in the cluster of TOXG, an Ala racemase, which produces D-Ala for incorporation by HTS1 into HC-toxin. The polypeptide is HC-toxin synthetase (Cochliobolus carbonum (Maize leaf spot fungus)).